The primary structure comprises 148 residues: Caltractin (148 aa).

EF-hand domains follow at residues 4–39 (EQKQ…LGFE), 40–75 (PKKE…KMGE), 77–112 (DSRE…LGEN), and 113–148 (MTDE…TSLF). 10 residues coordinate Ca(2+): aspartate 17, aspartate 19, serine 21, threonine 23, glutamate 28, aspartate 53, aspartate 55, serine 57, threonine 59, and glutamate 64. Residues aspartate 126, aspartate 128, aspartate 130, glutamate 132, and glutamate 137 each contribute to the Ca(2+) site.

Belongs to the centrin family. As to expression, ubiquitous.

This calcium-binding protein is found in the basal body complexes (the functional homolog of the centrosome in animal cell). In mitotic cells it is specifically associated with the poles of the mitotic spindles at the sites of the duplicated basal body complexes. The sequence is that of Caltractin from Tetraselmis striata (Green microalga).